A 565-amino-acid polypeptide reads, in one-letter code: Periplasmic trehalase (565 aa).

Residues 1–30 (MKSPAPSRPQKMALIPACIFLCFAALSVQA) form the signal peptide. Residues arginine 152, 159-160 (WD), asparagine 196, 205-207 (RSQ), 277-279 (RPE), and glycine 310 contribute to the substrate site. Catalysis depends on proton donor/acceptor residues aspartate 312 and glutamate 496. Glutamate 511 contacts substrate. Residues 539–565 (CDNVPATRPLSESTTQPVKQKEAEPTP) are disordered.

Belongs to the glycosyl hydrolase 37 family. In terms of assembly, monomer.

The protein resides in the periplasm. The catalysed reaction is alpha,alpha-trehalose + H2O = alpha-D-glucose + beta-D-glucose. Functionally, provides the cells with the ability to utilize trehalose at high osmolarity by splitting it into glucose molecules that can subsequently be taken up by the phosphotransferase-mediated uptake system. In Escherichia coli O6:H1 (strain CFT073 / ATCC 700928 / UPEC), this protein is Periplasmic trehalase.